We begin with the raw amino-acid sequence, 81 residues long: ATP synthase subunit c, chloroplastic (81 aa).

Transmembrane regions (helical) follow at residues 7–27 (AASV…PGIG) and 57–77 (LAFM…LLFA).

This sequence belongs to the ATPase C chain family. In terms of assembly, F-type ATPases have 2 components, F(1) - the catalytic core - and F(0) - the membrane proton channel. F(1) has five subunits: alpha(3), beta(3), gamma(1), delta(1), epsilon(1). F(0) has four main subunits: a(1), b(1), b'(1) and c(10-14). The alpha and beta chains form an alternating ring which encloses part of the gamma chain. F(1) is attached to F(0) by a central stalk formed by the gamma and epsilon chains, while a peripheral stalk is formed by the delta, b and b' chains.

The protein localises to the plastid. Its subcellular location is the chloroplast thylakoid membrane. In terms of biological role, f(1)F(0) ATP synthase produces ATP from ADP in the presence of a proton or sodium gradient. F-type ATPases consist of two structural domains, F(1) containing the extramembraneous catalytic core and F(0) containing the membrane proton channel, linked together by a central stalk and a peripheral stalk. During catalysis, ATP synthesis in the catalytic domain of F(1) is coupled via a rotary mechanism of the central stalk subunits to proton translocation. Key component of the F(0) channel; it plays a direct role in translocation across the membrane. A homomeric c-ring of between 10-14 subunits forms the central stalk rotor element with the F(1) delta and epsilon subunits. The polypeptide is ATP synthase subunit c, chloroplastic (Cryptomeria japonica (Japanese cedar)).